Consider the following 310-residue polypeptide: Serine/threonine-protein phosphatase 4 catalytic subunit (310 aa).

Asp-53, His-55, Asp-81, and Asn-113 together coordinate Mn(2+). Catalysis depends on His-114, which acts as the Proton donor. His-163 and His-237 together coordinate Mn(2+). Leu-310 carries the leucine methyl ester modification.

Belongs to the PPP phosphatase family. PP-4 (PP-X) subfamily. Catalytic subunit of the histone H2A phosphatase complex (HTP-C) containing PPH3, PSY2 and PSY4. The cofactor is Mn(2+).

It localises to the cytoplasm. The protein localises to the nucleus. It carries out the reaction O-phospho-L-seryl-[protein] + H2O = L-seryl-[protein] + phosphate. The enzyme catalyses O-phospho-L-threonyl-[protein] + H2O = L-threonyl-[protein] + phosphate. In terms of biological role, involved in the dephosphorylation and activation of the transcription factor GLN3 in response to nutrient availability. Forms the histone H2A phosphatase complex in association with the regulatory subunits PSY2 and PSY4, which dephosphorylates H2AS128ph (gamma-H2A) that has been displaced from sites of DNA lesions in the double-stranded DNA break repair process. Dephosphorylation is necessary for efficient recovery from the DNA damage checkpoint. The chain is Serine/threonine-protein phosphatase 4 catalytic subunit (PPH3) from Eremothecium gossypii (strain ATCC 10895 / CBS 109.51 / FGSC 9923 / NRRL Y-1056) (Yeast).